The following is a 552-amino-acid chain: Segmentation polarity homeobox protein engrailed (552 aa).

The span at 93–108 (SGSGSPASCSTPASST) shows a compositional bias: low complexity. Disordered regions lie at residues 93 to 112 (SGSG…PLTI), 130 to 171 (THTT…TAKP), 309 to 419 (PAAP…GGKN), and 433 to 460 (DRPS…PRTA). Residues 135 to 151 (EEEEAEEDDDIDVDVDD) are compositionally biased toward acidic residues. Residues 317-382 (PPLSSSASSL…SGSGVNASSP (66 aa)) show a composition bias toward low complexity. The span at 446–457 (QPKDKTNDEKRP) shows a compositional bias: basic and acidic residues. The homeobox DNA-binding region spans 454–513 (EKRPRTAFSSEQLARLKREFNENRYLTERRRQQLSSELGLNEAQIKIWFQNKRAKIKKST).

Belongs to the engrailed homeobox family. Post-translationally, phosphorylated. Phosphorylation may directly or allosterically modify its function.

The protein localises to the nucleus. Its function is as follows. This protein specifies the body segmentation pattern. It is required for the development of the central nervous system. Transcriptional regulator that represses activated promoters. Wg signaling operates by inactivating the SGG repression of EN autoactivation. This is Segmentation polarity homeobox protein engrailed (en) from Drosophila melanogaster (Fruit fly).